A 219-amino-acid chain; its full sequence is 2-hydroxy-3-keto-5-methylthiopentenyl-1-phosphate phosphatase (219 aa).

Belongs to the HAD-like hydrolase superfamily. MtnX family.

The enzyme catalyses 2-hydroxy-5-methylsulfanyl-3-oxopent-1-enyl phosphate + H2O = 1,2-dihydroxy-5-(methylsulfanyl)pent-1-en-3-one + phosphate. It participates in amino-acid biosynthesis; L-methionine biosynthesis via salvage pathway; L-methionine from S-methyl-5-thio-alpha-D-ribose 1-phosphate: step 4/6. Its function is as follows. Dephosphorylates 2-hydroxy-3-keto-5-methylthiopentenyl-1-phosphate (HK-MTPenyl-1-P) yielding 1,2-dihydroxy-3-keto-5-methylthiopentene (DHK-MTPene). This chain is 2-hydroxy-3-keto-5-methylthiopentenyl-1-phosphate phosphatase, found in Bacillus cereus (strain ATCC 14579 / DSM 31 / CCUG 7414 / JCM 2152 / NBRC 15305 / NCIMB 9373 / NCTC 2599 / NRRL B-3711).